The chain runs to 280 residues: Meiotic spindle formation protein 2 (280 aa).

The interval 1 to 104 (MSGLDDRKKL…LPKSSPESSV (104 aa)) is disordered. Positions 72-92 (LHSESKKELSRNPVSRGEEHS) are enriched in basic and acidic residues. Low complexity predominate over residues 93-104 (SSLPKSSPESSV).

In terms of assembly, interacts with mei-1.

Its subcellular location is the cytoplasm. It localises to the cytoskeleton. It is found in the spindle pole. Its function is as follows. Forms a heterodimeric complex in conjunction with mei-1 which severs microtubules in vitro in an ATP-dependent manner. This activity may promote rapid reorganization of cellular microtubule arrays. May act to target mei-1 within the cell. Required specifically for meiotic spindle formation in the female germline. The polypeptide is Meiotic spindle formation protein 2 (mei-2) (Caenorhabditis elegans).